Consider the following 125-residue polypeptide: Small ribosomal subunit protein uS11 (125 aa).

Belongs to the universal ribosomal protein uS11 family. As to quaternary structure, part of the 30S ribosomal subunit. Interacts with proteins S7 and S18. Binds to IF-3.

Its function is as follows. Located on the platform of the 30S subunit, it bridges several disparate RNA helices of the 16S rRNA. Forms part of the Shine-Dalgarno cleft in the 70S ribosome. The chain is Small ribosomal subunit protein uS11 from Aquifex aeolicus (strain VF5).